A 252-amino-acid chain; its full sequence is uncharacterized protein (252 aa).

In terms of domain architecture, HTH deoR-type spans 3-58; it reads AKDRIQAIKQMVANDKKVTVSNLSGIFQVTEETIRRDLEKLEDEGFLTRTYGGAVL. The segment at residues 20–39 is a DNA-binding region (H-T-H motif); it reads VTVSNLSGIFQVTEETIRRD.

This is an uncharacterized protein from Escherichia coli (strain K12).